A 274-amino-acid polypeptide reads, in one-letter code: DegV domain-containing protein Cgl2349/cg2579 (274 aa).

The 257-residue stretch at 3 to 259 (VRVIVDSSAC…PGAVSVSAVF (257 aa)) folds into the DegV domain. Residues Thr39 and Ser73 each coordinate hexadecanoate.

Monomer.

Functionally, binds long-chain fatty acids, such as palmitate, and may play a role in lipid transport or fatty acid metabolism. This chain is DegV domain-containing protein Cgl2349/cg2579, found in Corynebacterium glutamicum (strain ATCC 13032 / DSM 20300 / JCM 1318 / BCRC 11384 / CCUG 27702 / LMG 3730 / NBRC 12168 / NCIMB 10025 / NRRL B-2784 / 534).